Reading from the N-terminus, the 603-residue chain is Geraniol synthase Tps-5073G30, chloroplastic (603 aa).

The transit peptide at 1-35 (MCSISQKVVIGLNKAAANNNLQNLDRRGFKTRCVS) directs the protein to the chloroplast. Residues R319, D356, D360, R497, and D500 each coordinate (2E)-geranyl diphosphate. Positions 356 and 360 each coordinate Mg(2+). Residues 356-360 (DDVYD) carry the DDXXD motif motif. 3 residues coordinate Mg(2+): D500, T504, and E508.

The protein belongs to the terpene synthase family. Tpsb subfamily. Monomer. It depends on Mg(2+) as a cofactor. The cofactor is Mn(2+).

Its subcellular location is the plastid. It localises to the chloroplast. It catalyses the reaction (2E)-geranyl diphosphate + H2O = (2E)-geraniol + diphosphate. It participates in secondary metabolite biosynthesis; terpenoid biosynthesis. Monoterpene synthase (mono-TPS) involved in the biosynthesis of monoterpenes natural products. Catalyzes the conversion of (2E)-geranyl diphosphate (GPP) into geraniol. The protein is Geraniol synthase Tps-5073G30, chloroplastic of Perilla frutescens (Beefsteak mint).